We begin with the raw amino-acid sequence, 399 residues long: Stearoyl-[acyl-carrier-protein] 9-desaturase, chloroplastic (399 aa).

Polar residues predominate over residues 1-12 (MALNLNPVSTPF). The N-terminal 35 residues, 1–35 (MALNLNPVSTPFQCRRLPSFSPRQTPSRRSPKFFM), are a transit peptide targeting the chloroplast. The interval 1–57 (MALNLNPVSTPFQCRRLPSFSPRQTPSRRSPKFFMASTLSSSSPKEAESLKKPFSPP) is disordered. Glu141, Glu179, His182, Glu232, Glu265, and His268 together coordinate Fe cation.

The protein belongs to the fatty acid desaturase type 2 family. Homodimer. Fe(2+) is required as a cofactor.

It localises to the plastid. The protein localises to the chloroplast. The enzyme catalyses octadecanoyl-[ACP] + 2 reduced [2Fe-2S]-[ferredoxin] + O2 + 2 H(+) = (9Z)-octadecenoyl-[ACP] + 2 oxidized [2Fe-2S]-[ferredoxin] + 2 H2O. The protein operates within lipid metabolism; fatty acid metabolism. Functionally, converts stearoyl-ACP to oleoyl-ACP by introduction of a cis double bond between carbons 9 and 10 of the acyl chain. The polypeptide is Stearoyl-[acyl-carrier-protein] 9-desaturase, chloroplastic (Spinacia oleracea (Spinach)).